The primary structure comprises 108 residues: Nucleoid-associated protein Bphy_0952 (108 aa).

A disordered region spans residues 87 to 108 (AQEKMGGMTSGLPLPPGFKLPF). Over residues 99–108 (PLPPGFKLPF) the composition is skewed to pro residues.

Belongs to the YbaB/EbfC family. As to quaternary structure, homodimer.

Its subcellular location is the cytoplasm. The protein resides in the nucleoid. Functionally, binds to DNA and alters its conformation. May be involved in regulation of gene expression, nucleoid organization and DNA protection. The chain is Nucleoid-associated protein Bphy_0952 from Paraburkholderia phymatum (strain DSM 17167 / CIP 108236 / LMG 21445 / STM815) (Burkholderia phymatum).